A 209-amino-acid polypeptide reads, in one-letter code: Orotate phosphoribosyltransferase (209 aa).

5-phospho-alpha-D-ribose 1-diphosphate-binding positions include arginine 96, lysine 100, histidine 102, and 122–130; that span reads EDLISTGGS. Serine 126 contributes to the orotate binding site.

It belongs to the purine/pyrimidine phosphoribosyltransferase family. PyrE subfamily. Homodimer. The cofactor is Mg(2+).

The catalysed reaction is orotidine 5'-phosphate + diphosphate = orotate + 5-phospho-alpha-D-ribose 1-diphosphate. Its pathway is pyrimidine metabolism; UMP biosynthesis via de novo pathway; UMP from orotate: step 1/2. Its function is as follows. Catalyzes the transfer of a ribosyl phosphate group from 5-phosphoribose 1-diphosphate to orotate, leading to the formation of orotidine monophosphate (OMP). This Streptococcus agalactiae serotype Ia (strain ATCC 27591 / A909 / CDC SS700) protein is Orotate phosphoribosyltransferase.